The sequence spans 852 residues: Disease resistance RPP13-like protein 4 (852 aa).

Residues 17–68 (LEEKGRTVSDYRKQLEDLQSELKYMQSFLKDAERQKRTNETLRTLVADLREL) are a coiled coil. ADP is bound by residues Arg-149, Val-161, 189-196 (GMGGLGKT), Arg-297, and Lys-363. Positions 164 to 410 (EGDKRKIKEW…MSSLQLSYDE (247 aa)) constitute an NB-ARC domain. LRR repeat units lie at residues 558–581 (CKYL…ILDE), 585–609 (LQHL…MEDL), 633–657 (FKKL…IGSL), 683–706 (LTNL…ELDS), 763–786 (LPML…FWGN), and 798–824 (LSSL…VTAN).

The protein belongs to the disease resistance NB-LRR family. RPP13 subfamily. As to quaternary structure, interacts with ZED1/ZRK5. Component of a stable high-order oligomeric complex made of RKS1 and RPP13L4/ZAR1 which recruits ZED1-related kinases (e.g. uridylylated PBL2 and acetylated ZED1/ZRK5) in the presence of ATP and pathogenic bacteria type III secreted effector (T3SE) proteins (e.g. Pseudomonas syringae HopZ1a and HopF2a and Xanthomonas campestris pv. campestris (Xcc) XopAC/AvrAC) to form a wheel-like pentameric resistosome; this complex triggers immunity toward pathogenic bacteria (e.g. X.campestris and P.syringae), especially in vascular tissues. Interacts with RKS1, ZED1/ZRK5, ZRK3, ZRK6 and ZRK15.

The protein localises to the cell membrane. The protein resides in the nucleus. With respect to regulation, exhibits autoinhibition activity. CC-NB-LRR receptor-like protein required for recognition of pathogenic bacteria type III effectors (T3E) such as Pseudomonas syringae HopZ1a and HopF2a and Xanthomonas campestris pv. campestris (Xcc) XopAC/AvrAC; this recognition requires ZED1-related kinases (e.g. PBL2, ZRK3 and ZED1/ZRK5). Confers allele-specific recognition and virulence attenuation of HopZ1a. Immunity mediated by RPP13L4/ZAR1 is independent of several genes required by other resistance protein signaling pathways such as NDR1 and RAR1. Together with ZED1/ZRK5, involved in the regulation of the ambient temperature-sensitive intersection of growth and immune response in the absence of pathogens. The protein is Disease resistance RPP13-like protein 4 (RPP13L4) of Arabidopsis thaliana (Mouse-ear cress).